Reading from the N-terminus, the 445-residue chain is Maltoporin (445 aa).

Residues 1 to 25 (MKMKAKWLPIAAGVTAALASQAAFA) form the signal peptide.

The protein belongs to the porin LamB (TC 1.B.3) family. In terms of assembly, homotrimer formed of three 18-stranded antiparallel beta-barrels, containing three independent channels.

Its subcellular location is the cell outer membrane. It catalyses the reaction beta-maltose(in) = beta-maltose(out). In terms of biological role, involved in the transport of maltose and maltodextrins. The protein is Maltoporin of Aeromonas salmonicida.